The chain runs to 475 residues: MAYTQSKSQKVGYQAGVKDYRLTYYTPDYTPKDTDILAAFRVTPQPGVPFEEAAAAVAAESSTGTWTTVWTDLLTDLDRYKGCCYDIEPLPGEDNQFIAYIAYPLDLFEEGSVTNMLTSIVGNVFGFKALKALRLEDLRIPVAYLKTFQGPPHGIQVERDKLNKYGRPLLGCTIKPKLGLSAKNYGRAVYECLRGGLDFTKDDENINSQPFQRWRDRFLFVADAIHKAQAETGEIKGHYLNVTAPTCEEMLKRAEFAKELEMPIIMHDFLTAGFTANTTLSKWCRDNGMLLHIHRAMHAVMDRQKNHGIHFRVLAKCLRMSGGDHIHTGTVVGKLEGDKAVTLGFVDLLRENYIEQDRSRGIYFTQDWASMPGVMAVASGGIHVWHMPALVDIFGDDAVLQFGGGTLGHPWGNAPGATANRVALEACIQARNEGRDLMREGGDIIREAARWSPELAAACELWKEIKFEFEAQDTI.

Residues Asn123 and Thr173 each contribute to the substrate site. Lys175 acts as the Proton acceptor in catalysis. Lys177 serves as a coordination point for substrate. Lys201, Asp203, and Glu204 together coordinate Mg(2+). The residue at position 201 (Lys201) is an N6-carboxylysine. His294 serves as the catalytic Proton acceptor. Residues Arg295, His327, and Ser379 each contribute to the substrate site.

This sequence belongs to the RuBisCO large chain family. Type I subfamily. In terms of assembly, heterohexadecamer of 8 large chains and 8 small chains; disulfide-linked. The disulfide link is formed within the large subunit homodimers. Interacts with assembly factor Raf1 which helps form the holoenzyme, most interaction (and folding) occurs in the cytoplasm. It depends on Mg(2+) as a cofactor. The disulfide bond which can form in the large chain dimeric partners within the hexadecamer appears to be associated with oxidative stress and protein turnover.

It is found in the carboxysome. It localises to the cytoplasm. It catalyses the reaction 2 (2R)-3-phosphoglycerate + 2 H(+) = D-ribulose 1,5-bisphosphate + CO2 + H2O. The enzyme catalyses D-ribulose 1,5-bisphosphate + O2 = 2-phosphoglycolate + (2R)-3-phosphoglycerate + 2 H(+). RuBisCO catalyzes two reactions: the carboxylation of D-ribulose 1,5-bisphosphate, the primary event in carbon dioxide fixation, as well as the oxidative fragmentation of the pentose substrate in the photorespiration process. Both reactions occur simultaneously and in competition at the same active site. This is Ribulose bisphosphate carboxylase large chain from Thermosynechococcus vestitus (strain NIES-2133 / IAM M-273 / BP-1).